A 317-amino-acid polypeptide reads, in one-letter code: sn-1-specific diacylglycerol lipase ABHD11 (317 aa).

The N-terminal 20 residues, 1–20 (MSNFAMSALCRVFTRGAPCG), are a transit peptide targeting the mitochondrion. One can recognise an AB hydrolase-1 domain in the interval 69–304 (PLVFLHGLFG…ASHWIHADKP (236 aa)). Residues S142, E238, and H297 each act as charge relay system in the active site.

This sequence belongs to the AB hydrolase superfamily. In terms of processing, phosphorylated.

It is found in the mitochondrion. It localises to the mitochondrion matrix. The catalysed reaction is 1-octadecanoyl-2-(5Z,8Z,11Z,14Z-eicosatetraenoyl)-sn-glycerol + H2O = 2-(5Z,8Z,11Z,14Z-eicosatetraenoyl)-glycerol + octadecanoate + H(+). It carries out the reaction a 1,2-diacyl-sn-glycerol + H2O = a 2-acylglycerol + a fatty acid + H(+). The enzyme catalyses a 1,3-diacyl-sn-glycerol + H2O = a 1-acyl-sn-glycerol + a fatty acid + H(+). It catalyses the reaction 1-octadecanoyl-2-(9Z-octadecenoyl)-sn-glycerol + H2O = 2-(9Z-octadecenoyl)-glycerol + octadecanoate + H(+). The catalysed reaction is 1-octadecanoyl-2-(4Z,7Z,10Z,13Z,16Z,19Z-docosahexaenoyl)-sn-glycerol + H2O = 2-(4Z,7Z,10Z,13Z,16Z,19Z-docosahexaenoyl)-glycerol + octadecanoate + H(+). It carries out the reaction 1,2-didecanoylglycerol + H2O = decanoylglycerol + decanoate + H(+). Catalyzes the hydrolysis of diacylglycerol in vitro and may function as a key regulator in lipid metabolism, namely by regulating the intracellular levels of diacylglycerol. 1,2-diacyl-sn-glycerols are the preferred substrate over 1,3-diacyl-sn-glycerols. The enzyme hydrolyzes stearate in preference to palmitate from the sn-1 position of 1,2-diacyl-sn-glycerols. The polypeptide is sn-1-specific diacylglycerol lipase ABHD11 (Danio rerio (Zebrafish)).